The following is a 175-amino-acid chain: Co-chaperone protein HscB homolog (175 aa).

Residues 7–79 form the J domain; that stretch reads SHFDLFDLPA…LKRATYLLHL (73 aa).

This sequence belongs to the HscB family. As to quaternary structure, interacts with HscA and stimulates its ATPase activity.

Functionally, co-chaperone involved in the maturation of iron-sulfur cluster-containing proteins. Seems to help targeting proteins to be folded toward HscA. The sequence is that of Co-chaperone protein HscB homolog from Paraburkholderia phytofirmans (strain DSM 17436 / LMG 22146 / PsJN) (Burkholderia phytofirmans).